We begin with the raw amino-acid sequence, 144 residues long: Transcriptional regulator SlyA (144 aa).

The HTH marR-type domain occupies 2-135; the sequence is ESPLGSDLAR…LSNMIAKLEK (134 aa). The segment at residues 49–72 is a DNA-binding region (H-T-H motif); that stretch reads QIQLAKAIGIEQPSLVRTLDQLEE.

This sequence belongs to the SlyA family. As to quaternary structure, homodimer.

Functionally, transcription regulator that can specifically activate or repress expression of target genes. In Sodalis glossinidius (strain morsitans), this protein is Transcriptional regulator SlyA.